Reading from the N-terminus, the 438-residue chain is Battenin (438 aa).

The interval M1–R27 is disordered. Residues M1–N37 lie on the Cytoplasmic side of the membrane. Phosphoserine is present on S14. A helical membrane pass occupies residues A38–A58. At A59–R127 the chain is on the lumenal side. Positions Q67–S87 are disordered. N-linked (GlcNAc...) asparagine glycans are attached at residues N71 and N85. Residues V128–V148 traverse the membrane as a helical segment. At G149–S151 the chain is on the cytoplasmic side. A helical transmembrane segment spans residues L152 to L172. Residues T173–S182 lie on the Lumenal side of the membrane. The helical transmembrane segment at W183 to T203 threads the bilayer. Residues Q204 to V277 lie on the Cytoplasmic side of the membrane. Positions P239–S261 are disordered. The Lysosomal targeting motif signature appears at E242–E244. The Lysosomal targeting motif. Required for AP1G1, AP2A2 and AP3D1 interaction motif lies at L253 to I254. The helical transmembrane segment at F278–I298 threads the bilayer. Residues N299 to W346 are Lumenal-facing. Residue N310 is glycosylated (N-linked (GlcNAc...) asparagine). The helical transmembrane segment at V347 to F367 threads the bilayer. Residues L368 to P438 are Cytoplasmic-facing. A Lysosomal targeting motif motif is present at residues M409–G419. C435 is subject to Cysteine methyl ester. The S-farnesyl cysteine moiety is linked to residue C435. A propeptide spans H436–P438 (removed in mature form).

It belongs to the battenin family. Homooligomer. Interacts with DCTN1, KIF3A, RAB7A and RILP. Interacts with CLN5. Interacts with KCNIP3. Highly glycosylated. In terms of processing, farnesylation is important for trafficking to lysosomes. Expressed throughout the brain, such as, in the cerebral cortex, hippocampus, cerebellum and several different cerebral nuclei (at protein level). In the cerebral cortex, expressed in all cortical layers. In the hippocampus, expressed in the granule cells in the dentate gyrus and the pyramidal cells of the hippocampus proper. In the cerebellum expressed in the granular and molecular layers, and in the Purkinje cell layer.

The protein resides in the lysosome membrane. It localises to the late endosome. It is found in the lysosome. The protein localises to the membrane raft. Its subcellular location is the golgi apparatus. The protein resides in the trans-Golgi network. It localises to the synapse. It is found in the synaptosome. The protein localises to the early endosome membrane. Its subcellular location is the late endosome membrane. The protein resides in the cytoplasmic vesicle. It localises to the autophagosome. In terms of biological role, mediates microtubule-dependent, anterograde transport connecting the Golgi network, endosomes, autophagosomes, lysosomes and plasma membrane, and participates in several cellular processes such as regulation of lysosomal pH, lysosome protein degradation, receptor-mediated endocytosis, autophagy, transport of proteins and lipids from the TGN, apoptosis and synaptic transmission. Facilitates the proteins transport from trans-Golgi network (TGN)-to other membrane compartments such as transport of microdomain-associated proteins to the plasma membrane, IGF2R transport to the lysosome where it regulates the CTSD release leading to regulation of CTSD maturation and thereby APP intracellular processing. Moreover regulates CTSD activity in response to osmotic stress. Also binds galactosylceramide and transports it from the trans Golgi to the rafts, which may have immediate and downstream effects on cell survival by modulating ceramide synthesis. At the plasma membrane, regulates actin-dependent events including filopodia formation, cell migration, and pinocytosis through ARF1-CDC42 pathway and also the cytoskeleton organization through interaction with MYH10 and fodrin leading to the regulation of the plasma membrane association of Na+, K+ ATPase complex. Regulates synaptic transmission in the amygdala, hippocampus, and cerebellum through regulation of synaptic vesicles density and their proximity to active zones leading to modulation of short-term plasticity and age-dependent anxious behavior, learning and memory. Regulates autophagic vacuoles (AVs) maturation by modulating the trafficking between endocytic and autophagolysosomal/lysosomal compartments, which involves vesicle fusion leading to regulation of degradation process. Also participates in cellular homeostasis of compounds such as, water, ions, amino acids, proteins and lipids in several tissue namely in brain and kidney through regulation of their transport and synthesis. The chain is Battenin from Mus musculus (Mouse).